We begin with the raw amino-acid sequence, 986 residues long: Translation initiation factor IF-2 (986 aa).

A compositionally biased stretch (basic and acidic residues) spans 75–94 (KRLSRLEEQSRKTYEKEQHL). 4 disordered regions span residues 75 to 105 (KRLS…APPL), 127 to 148 (PPSK…PDAP), 185 to 258 (SEVP…VSFD), and 277 to 394 (GRHK…HEED). 2 stretches are compositionally biased toward low complexity: residues 185 to 210 (SEVP…ESPL) and 218 to 235 (SEPQ…LPEI). Over residues 292-313 (DALKDEFEPKPAEESRVEEKVV) the composition is skewed to basic and acidic residues. Low complexity predominate over residues 315–338 (AKKPPVKAAADVKPKPVVADSSSS). Residues 339 to 348 (AKKKGKKKKK) are compositionally biased toward basic residues. One can recognise a tr-type G domain in the interval 483-653 (TRPPVVTIMG…LTEAEMRELR (171 aa)). The interval 492–499 (GHVDHGKT) is G1. 492–499 (GHVDHGKT) lines the GTP pocket. Positions 517–521 (GITQH) are G2. Residues 539 to 542 (DTPG) form a G3 region. Residues 539–543 (DTPGH) and 593–596 (NKID) contribute to the GTP site. The interval 593-596 (NKID) is G4. Residues 629 to 631 (SAK) form a G5 region.

It belongs to the TRAFAC class translation factor GTPase superfamily. Classic translation factor GTPase family. IF-2 subfamily.

Its subcellular location is the cytoplasm. Functionally, one of the essential components for the initiation of protein synthesis. Protects formylmethionyl-tRNA from spontaneous hydrolysis and promotes its binding to the 30S ribosomal subunits. Also involved in the hydrolysis of GTP during the formation of the 70S ribosomal complex. This Pelodictyon phaeoclathratiforme (strain DSM 5477 / BU-1) protein is Translation initiation factor IF-2.